A 1522-amino-acid chain; its full sequence is MDRLCGSGELGSKFWDSNLTVYTNTPDLTPCFQNSLLAWVPCIYLWAALPCYLFYLRHHRLGYIVLSCLSRLKTALGVLLWCISWVDLFYSFHGLVHGSSPAPVFFITPLLVGITMLLATLLIQYERLRGVRSSGVLIIFWLLCVICAIIPFRSKILLALAEGKILDPFRFTTFYIYFALVLCAFILSCFQEKPPLFSPENLDTNPCPEASAGFFSRLSFWWFTKLAILGYRRPLEDSDLWSLSEEDCSHKVVQRLLEAWQKQQTQASGPQTAALEPKIAGEDEVLLKARPKTKKPSFLRALVRTFTSSLLMGACFKLIQDLSPSSTHSCSASSSGLFRPHGPYWWGFLLAGLMFVSSTMQTLILHQHYHCIFVMALRIRTAIIGVIYRKALTITNSVKREYTVGEMVNLMSVDAQRFMDVSPFINLLWSAPLQVILAIYFLWQILGPSALAGVAVIVLLIPLNGAVSMKMKTYQVQQMKFKDSRIKLMSEILNGIKVLKLYAWEPTFLEQVEGIRQGELQLLRKGAYLQAISTFIWVCTPFMVTLITLGVYVCVDKNNVLDAEKAFVSLSLFNILKIPLNLLPQLISGMTQTSVSLKRIQDFLNQDELDPQCVERKTISPGRAITIHNGTFSWSKDLPPTLHSINIQIPKGALVAVVGPVGCGKSSLVSALLGEMEKLEGAVSVKGSVAYVPQQAWIQNCTLQENVLFGQPMNPKRYQQALETCALLADLDVLPGGDQTEIGEKGINLSGGQRQRVSLARAVYSDANIFLLDDPLSAVDSHVAKHIFDQVIGPEGVLAGKTRVLVTHGISFLPQTDFIIVLADGQITEMGHYSELLQHDGSFANFLRNYAPDENQEANEGVLQHANEEVLLLEDTLSTHTDLTDTEPAIYEVRKQFMREMSSLSSEGEGQNRPVLKRYTSSLEKEVPATQTKETGALIKEEIAETGNVKLSVYWDYAKSVGLCTTLFICLLYAGQNAVAIGANVWLSAWTNDVEEHGQQNNTSVRLGVYATLGILQGLLVMLSAFTMVVGAIQAARLLHTALLHNQIRAPQSFFDTTPSGRILNRFSKDIYVIHEVLAPTILMLFNSFYTSISTIVVIVASTPLFCVVVLPLAVFYGFVQRFYVATSRQLKRLESVSRSPIFSHFSETVTGTSVIRAYGRVQDFKVLSDAKVDSNQKTTYPYIASNRWLGVHVEFVGNCVVLFSALFAVIGRNSLNPGLVGLSVSYALQVTLSLNWMIRTLSDLESNIIAVERVKEYSKTETEAPWVLESNRAPEGWPRSGVVEFRNYSVRYRPGLELVLKNLTLHVQGGEKVGIVGRTGAGKSSMTLCLFRILEAAEGEIFIDGLNVAHIGLHDLRSQLTIIPQDPILFSGTLRMNLDPFGRYSDEDIWRTLELSHLSAFVSSQPTGLDFQCSEGGDNLSVGQRQLVCLARALLRKSRVLVLDEATAAIDLETDDLIQGTIRTQFEDCTVLTIAHRLNTIMDYNRVLVLDKGVVAEFDSPVNLIAAGGIFYGMAKDAGLA.

Residues 1–32 (MDRLCGSGELGSKFWDSNLTVYTNTPDLTPCF) are Extracellular-facing. N18 carries an N-linked (GlcNAc...) asparagine glycan. The chain crosses the membrane as a helical span at residues 33–53 (QNSLLAWVPCIYLWAALPCYL). Topologically, residues 54–73 (FYLRHHRLGYIVLSCLSRLK) are cytoplasmic. The chain crosses the membrane as a helical span at residues 74–94 (TALGVLLWCISWVDLFYSFHG). Residues 95–99 (LVHGS) lie on the Extracellular side of the membrane. Residues 100–120 (SPAPVFFITPLLVGITMLLAT) traverse the membrane as a helical segment. Topologically, residues 121 to 132 (LLIQYERLRGVR) are cytoplasmic. The chain crosses the membrane as a helical span at residues 133 to 153 (SSGVLIIFWLLCVICAIIPFR). Over 154–171 (SKILLALAEGKILDPFRF) the chain is Extracellular. A helical transmembrane segment spans residues 172–192 (TTFYIYFALVLCAFILSCFQE). Residues 193–301 (KPPLFSPENL…KTKKPSFLRA (109 aa)) lie on the Cytoplasmic side of the membrane. The chain crosses the membrane as a helical span at residues 302–322 (LVRTFTSSLLMGACFKLIQDL). The 283-residue stretch at 310–592 (LLMGACFKLI…LPQLISGMTQ (283 aa)) folds into the ABC transmembrane type-1 1 domain. At 323–347 (SPSSTHSCSASSSGLFRPHGPYWWG) the chain is on the extracellular side. A helical transmembrane segment spans residues 348–368 (FLLAGLMFVSSTMQTLILHQH). The Cytoplasmic segment spans residues 369–424 (YHCIFVMALRIRTAIIGVIYRKALTITNSVKREYTVGEMVNLMSVDAQRFMDVSPF). The helical transmembrane segment at 425 to 445 (INLLWSAPLQVILAIYFLWQI) threads the bilayer. Residues 446–448 (LGP) lie on the Extracellular side of the membrane. Residues 449–469 (SALAGVAVIVLLIPLNGAVSM) traverse the membrane as a helical segment. The Cytoplasmic portion of the chain corresponds to 470-531 (KMKTYQVQQM…LLRKGAYLQA (62 aa)). The chain crosses the membrane as a helical span at residues 532–552 (ISTFIWVCTPFMVTLITLGVY). Residues 553-574 (VCVDKNNVLDAEKAFVSLSLFN) are Extracellular-facing. A helical transmembrane segment spans residues 575–595 (ILKIPLNLLPQLISGMTQTSV). Over 596–958 (SLKRIQDFLN…VKLSVYWDYA (363 aa)) the chain is Cytoplasmic. One can recognise an ABC transporter 1 domain in the interval 625 to 849 (ITIHNGTFSW…DGSFANFLRN (225 aa)). An ATP-binding site is contributed by 659 to 666 (GPVGCGKS). 2 positions are modified to phosphoserine: S902 and S905. A helical transmembrane segment spans residues 959–979 (KSVGLCTTLFICLLYAGQNAV). Residues 966-1247 (TLFICLLYAG…MIRTLSDLES (282 aa)) form the ABC transmembrane type-1 2 domain. The Extracellular portion of the chain corresponds to 980-1016 (AIGANVWLSAWTNDVEEHGQQNNTSVRLGVYATLGIL). N-linked (GlcNAc...) asparagine glycosylation is found at N1001 and N1002. A helical transmembrane segment spans residues 1017–1037 (QGLLVMLSAFTMVVGAIQAAR). Residues 1038-1080 (LLHTALLHNQIRAPQSFFDTTPSGRILNRFSKDIYVIHEVLAP) are Cytoplasmic-facing. Residues 1081 to 1101 (TILMLFNSFYTSISTIVVIVA) form a helical membrane-spanning segment. S1102 is a topological domain (extracellular). Residues 1103–1123 (TPLFCVVVLPLAVFYGFVQRF) traverse the membrane as a helical segment. Topologically, residues 1124–1194 (YVATSRQLKR…ASNRWLGVHV (71 aa)) are cytoplasmic. Residues 1195-1215 (EFVGNCVVLFSALFAVIGRNS) form a helical membrane-spanning segment. At 1216 to 1217 (LN) the chain is on the extracellular side. The chain crosses the membrane as a helical span at residues 1218-1238 (PGLVGLSVSYALQVTLSLNWM). Over 1239 to 1522 (IRTLSDLESN…YGMAKDAGLA (284 aa)) the chain is Cytoplasmic. An ABC transporter 2 domain is found at 1286–1518 (FRNYSVRYRP…GGIFYGMAKD (233 aa)). 1318–1325 (GRTGAGKS) contacts ATP.

It belongs to the ABC transporter superfamily. ABCC family. Conjugate transporter (TC 3.A.1.208) subfamily. In terms of tissue distribution, expressed in lung, ileum, colon and liver. Higher in liver of Eisai hyperbilirubinemic rats.

The protein resides in the basolateral cell membrane. It is found in the basal cell membrane. The enzyme catalyses an S-substituted glutathione(in) + ATP + H2O = an S-substituted glutathione(out) + ADP + phosphate + H(+). The catalysed reaction is ATP + H2O + xenobioticSide 1 = ADP + phosphate + xenobioticSide 2.. It catalyses the reaction taurocholate(in) + ATP + H2O = taurocholate(out) + ADP + phosphate + H(+). It carries out the reaction glycocholate(in) + ATP + H2O = glycocholate(out) + ADP + phosphate + H(+). The enzyme catalyses taurolithocholate 3-sulfate(in) + ATP + H2O = taurolithocholate 3-sulfate(out) + ADP + phosphate + H(+). The catalysed reaction is 17beta-estradiol 17-O-(beta-D-glucuronate)(in) + ATP + H2O = 17beta-estradiol 17-O-(beta-D-glucuronate)(out) + ADP + phosphate + H(+). It catalyses the reaction dehydroepiandrosterone 3-sulfate(in) + ATP + H2O = dehydroepiandrosterone 3-sulfate(out) + ADP + phosphate + H(+). It carries out the reaction leukotriene C4(in) + ATP + H2O = leukotriene C4(out) + ADP + phosphate + H(+). The enzyme catalyses (4Z,15Z)-bilirubin IXalpha C8-beta-D-glucuronoside(in) + ATP + H2O = (4Z,15Z)-bilirubin IXalpha C8-beta-D-glucuronoside(out) + ADP + phosphate + H(+). The catalysed reaction is (4Z,15Z)-bilirubin IXalpha C8,C12-beta-D-bisglucuronoside(in) + ATP + H2O = (4Z,15Z)-bilirubin IXalpha C8,C12-beta-D-bisglucuronoside(out) + ADP + phosphate + H(+). It catalyses the reaction taurochenodeoxycholate 3-sulfate(in) + ATP + H2O = taurochenodeoxycholate 3-sulfate(out) + ADP + phosphate + H(+). ATP-dependent transporter of the ATP-binding cassette (ABC) family that binds and hydrolyzes ATP to enable active transport of various substrates including many drugs, toxicants and endogenous compound across cell membranes. Transports glucuronide conjugates such as bilirubin diglucuronide, estradiol-17-beta-o-glucuronide and GSH conjugates such as leukotriene C4 (LTC4). Transports also various bile salts (taurocholate, glycocholate, taurochenodeoxycholate-3-sulfate, taurolithocholate- 3-sulfate). Does not contribute substantially to bile salt physiology but provides an alternative route for the export of bile acids and glucuronides from cholestatic hepatocytes. May contribute to regulate the transport of organic compounds in testes across the blood-testis-barrier. The sequence is that of ATP-binding cassette sub-family C member 3 (Abcc3) from Rattus norvegicus (Rat).